The chain runs to 623 residues: Peptidoglycan D,D-transpeptidase MrdA (623 aa).

The helical transmembrane segment at 17–37 threads the bilayer; that stretch reads VIVAFGVVVVCFGILIFNLYN. Catalysis depends on Ser326, which acts as the Acyl-ester intermediate.

This sequence belongs to the transpeptidase family. MrdA subfamily.

Its subcellular location is the cell inner membrane. It carries out the reaction Preferential cleavage: (Ac)2-L-Lys-D-Ala-|-D-Ala. Also transpeptidation of peptidyl-alanyl moieties that are N-acyl substituents of D-alanine.. It functions in the pathway cell wall biogenesis; peptidoglycan biosynthesis. Functionally, catalyzes cross-linking of the peptidoglycan cell wall. This chain is Peptidoglycan D,D-transpeptidase MrdA, found in Salmonella typhimurium (strain SL1344).